A 296-amino-acid polypeptide reads, in one-letter code: Deleted in azoospermia-like (296 aa).

The span at M1–N18 shows a compositional bias: polar residues. The segment at M1–A25 is disordered. Residues N40–R115 enclose the RRM domain. The homodimerization stretch occupies residues K80 to N132. Residues A167–Q190 enclose the DAZ domain. Y277 carries the post-translational modification Phosphotyrosine.

Belongs to the RRM DAZ family. As to quaternary structure, homodimer and heterodimer. Forms a heterodimer with DAZ. Interacts with BOLL, DAZAP1 and DAZAP2. Interacts with PUM2 Multiple DAZL RRMs can bind to a single RNA containing multiple GUU triplets. In terms of tissue distribution, testis specific.

It is found in the cytoplasm. The protein resides in the nucleus. In terms of biological role, RNA-binding protein, which is essential for gametogenesis in both males and females. Plays a central role during spermatogenesis. Acts by binding to the 3'-UTR of mRNA, specifically recognizing GUU triplets, and thereby regulating the translation of key transcripts. The chain is Deleted in azoospermia-like (DAZL) from Callithrix jacchus (White-tufted-ear marmoset).